The sequence spans 496 residues: Catalase isozyme 3 (496 aa).

The tract at residues 1-25 (MTMDPTKFRPSSSHDTTVTTTNAGA) is disordered. Residues 9 to 23 (RPSSSHDTTVTTTNA) show a composition bias toward polar residues. Catalysis depends on residues histidine 67 and asparagine 140. Tyrosine 351 lines the heme pocket. Residues 402–422 (PLRQAAPPTPLPPRPVAGRRE) form a disordered region.

Belongs to the catalase family. Homotetramer. Requires heme as cofactor. As to expression, leaf mesophyll cells, pericarp, seedling roots and the coleoptile.

It is found in the mitochondrion. The catalysed reaction is 2 H2O2 = O2 + 2 H2O. Its function is as follows. Occurs in almost all aerobically respiring organisms and serves to protect cells from the toxic effects of hydrogen peroxide. Its levels are highest in the light period and are lowest in the dark period, hence it may be important for scavenging hydrogen peroxide at night, rather than during the day. The chain is Catalase isozyme 3 (CAT3) from Zea mays (Maize).